The sequence spans 294 residues: Dof zinc finger protein DOF4.1 (294 aa).

A Dof-type zinc finger spans residues Arg68 to Lys122. Zn(2+)-binding residues include Cys70, Cys73, Cys95, and Cys98. 2 disordered regions span residues Arg109 to Ala178 and Met247 to Trp294. Composition is skewed to polar residues over residues Pro126–Asn136 and Lys157–Met173. A compositionally biased stretch (basic and acidic residues) spans Gly251 to Gly273. Residues Ile284 to Trp294 show a composition bias toward gly residues.

Its subcellular location is the nucleus. Its function is as follows. Transcription factor that binds specifically to a 5'-AA[AG]G-3' consensus core sequence. The polypeptide is Dof zinc finger protein DOF4.1 (DOF4.1) (Arabidopsis thaliana (Mouse-ear cress)).